Reading from the N-terminus, the 67-residue chain is Probable tautomerase bsl7456 (67 aa).

Catalysis depends on proline 2, which acts as the Proton acceptor; via imino nitrogen.

This sequence belongs to the 4-oxalocrotonate tautomerase family.

The protein is Probable tautomerase bsl7456 of Bradyrhizobium diazoefficiens (strain JCM 10833 / BCRC 13528 / IAM 13628 / NBRC 14792 / USDA 110).